The primary structure comprises 312 residues: Acetyl-coenzyme A carboxylase carboxyl transferase subunit alpha (312 aa).

Positions 36–286 (RLDKEVKSIY…KEYFLDALRT (251 aa)) constitute a CoA carboxyltransferase C-terminal domain.

This sequence belongs to the AccA family. Acetyl-CoA carboxylase is a heterohexamer composed of biotin carboxyl carrier protein (AccB), biotin carboxylase (AccC) and two subunits each of ACCase subunit alpha (AccA) and ACCase subunit beta (AccD).

It is found in the cytoplasm. The catalysed reaction is N(6)-carboxybiotinyl-L-lysyl-[protein] + acetyl-CoA = N(6)-biotinyl-L-lysyl-[protein] + malonyl-CoA. Its pathway is lipid metabolism; malonyl-CoA biosynthesis; malonyl-CoA from acetyl-CoA: step 1/1. Component of the acetyl coenzyme A carboxylase (ACC) complex. First, biotin carboxylase catalyzes the carboxylation of biotin on its carrier protein (BCCP) and then the CO(2) group is transferred by the carboxyltransferase to acetyl-CoA to form malonyl-CoA. The protein is Acetyl-coenzyme A carboxylase carboxyl transferase subunit alpha of Helicobacter pylori (strain Shi470).